A 205-amino-acid polypeptide reads, in one-letter code: Red chlorophyll catabolite reductase (205 aa).

Substrate contacts are provided by Glu-39 and Asp-175.

In terms of assembly, homodimer. The N-terminus is blocked. In etiolated and green primary leaves. Low amount in roots.

Its subcellular location is the plastid. The protein resides in the chloroplast stroma. The catalysed reaction is primary fluorescent chlorophyll catabolite + 2 oxidized [2Fe-2S]-[ferredoxin] = red chlorophyll catabolite + 2 reduced [2Fe-2S]-[ferredoxin] + 3 H(+). It participates in porphyrin-containing compound metabolism; chlorophyll degradation. Catalyzes the key reaction of chlorophyll catabolism, porphyrin macrocycle cleavage of pheophorbide a (pheide a) to a primary fluorescent catabolite (pFCC). Works in a two-step reaction with pheophorbide a oxygenase (PaO) by reducing the C20/C1 double bond of the intermediate, RCC. In Hordeum vulgare (Barley), this protein is Red chlorophyll catabolite reductase (rccR).